Reading from the N-terminus, the 959-residue chain is Glutamate receptor 3.4 (959 aa).

The N-terminal stretch at 1–35 is a signal peptide; it reads MGFLVMIREVSMAKAIRVVLLCVSVLWVVPKECAC. Residues 36-613 are Extracellular-facing; sequence RSNFSRNSSS…SPWSFLKPFT (578 aa). Residues Asn38, Asn42, Asn108, Asn365, Asn378, Asn404, Asn443, Asn461, and Asn576 are each glycosylated (N-linked (GlcNAc...) asparagine). Residues 614-634 form a helical membrane-spanning segment; the sequence is IEMWAVTGGFFLFVGAMVWIL. The Cytoplasmic portion of the chain corresponds to 635 to 643; the sequence is EHRFNQEFR. A helical transmembrane segment spans residues 644–664; that stretch reads GPPRRQLITIFWFSFSTMFFS. Topologically, residues 665 to 675 are cytoplasmic; sequence HRENTVSSLGR. Residues 676–696 traverse the membrane as a helical segment; sequence FVLIIWLFVVLIINSSYTASL. At 697–857 the chain is on the extracellular side; sequence TSILTIRQLT…SEDSQLSLKS (161 aa). A helical membrane pass occupies residues 858-878; that stretch reads FWGLFLICGITCFMALTVFFW. The Cytoplasmic segment spans residues 879 to 959; that stretch reads RVFWQYQRLL…TSQSQHGEIT (81 aa). Disordered regions lie at residues 893 to 913 and 936 to 959; these read DEER…SRAP and KSSK…GEIT. The segment covering 943–959 has biased composition (low complexity); that stretch reads STQSAAGTSQSQHGEIT.

Belongs to the glutamate-gated ion channel (TC 1.A.10.1) family. In terms of assembly, forms a heteromeric channel with GLR3.2. Highly expressed in roots and at lower levels in leaves and siliques. Expressed in seedlings, cotyledons, roots (e.g. root hairs, epidermis and cortex cells), stems, leaves (e.g. vascular bundles and hydathodes), and siliques. Expressed in root phloem.

It is found in the cell membrane. Its subcellular location is the plastid. The protein localises to the chloroplast membrane. Functionally, glutamate-gated receptor that probably acts as a non-selective cation channel, at least in hypocotyls. Can be triggered by Asn, Ser, Gly and, to a lower extent, Ala, Cys and Glu. May be involved in light-signal transduction and calcium homeostasis via the regulation of calcium influx into cells. Plays an important role in the calcium-based fast transmission of environmental stress. Acts as a negative regulator of lateral root initiation and development. May restrict primordia numbers and position along the root axis by a signaling process originating in the phloem. AtGLR3.4-mediated cytosolic calcium influx may be involved in the regulation of seed germination under salt stress by modulating sodium accumulation through the SOS pathway. The sequence is that of Glutamate receptor 3.4 from Arabidopsis thaliana (Mouse-ear cress).